A 474-amino-acid polypeptide reads, in one-letter code: Probable periplasmic serine endoprotease DegP-like (474 aa).

The signal sequence occupies residues M1–A26. Catalysis depends on charge relay system residues H116, D146, and S219. Substrate contacts are provided by residues G217 to S219 and L274 to I278. 2 PDZ domains span residues L263 to G354 and T360 to G462.

This sequence belongs to the peptidase S1C family.

The protein resides in the periplasm. It carries out the reaction Acts on substrates that are at least partially unfolded. The cleavage site P1 residue is normally between a pair of hydrophobic residues, such as Val-|-Val.. Its function is as follows. Might be efficient in the degradation of transiently denatured and unfolded proteins which accumulate in the periplasm following stress conditions. In Halomonas elongata (strain ATCC 33173 / DSM 2581 / NBRC 15536 / NCIMB 2198 / 1H9), this protein is Probable periplasmic serine endoprotease DegP-like (mucD).